A 320-amino-acid chain; its full sequence is Fructose-1,6-bisphosphatase class 1 (320 aa).

4 residues coordinate Mg(2+): glutamate 105, aspartate 124, leucine 126, and aspartate 127. Residues 127-130, tyrosine 233, and lysine 263 each bind substrate; that span reads DGSS. Glutamate 269 contacts Mg(2+).

Belongs to the FBPase class 1 family. Homotetramer. Requires Mg(2+) as cofactor.

It is found in the cytoplasm. The enzyme catalyses beta-D-fructose 1,6-bisphosphate + H2O = beta-D-fructose 6-phosphate + phosphate. It functions in the pathway carbohydrate biosynthesis; gluconeogenesis. The chain is Fructose-1,6-bisphosphatase class 1 from Methanocorpusculum labreanum (strain ATCC 43576 / DSM 4855 / Z).